Consider the following 328-residue polypeptide: Malate dehydrogenase (328 aa).

NAD(+) is bound at residue 11-17 (GAAGQIG). 2 residues coordinate substrate: R94 and R100. NAD(+) is bound by residues N107, Q114, and 131–133 (VGN). N133 and R164 together coordinate substrate. Residue H189 is the Proton acceptor of the active site.

This sequence belongs to the LDH/MDH superfamily. MDH type 2 family.

It catalyses the reaction (S)-malate + NAD(+) = oxaloacetate + NADH + H(+). Functionally, catalyzes the reversible oxidation of malate to oxaloacetate. This chain is Malate dehydrogenase, found in Stenotrophomonas maltophilia (strain R551-3).